We begin with the raw amino-acid sequence, 618 residues long: Manganese lipoxygenase (618 aa).

The N-terminal stretch at 1–16 (MRSRILAIVFAARHVA) is a signal peptide. A compositionally biased stretch (low complexity) spans 36-45 (SSTTVLPSPT). The segment at 36-58 (SSTTVLPSPTQYTLPNNDPNQGA) is disordered. Over residues 46–58 (QYTLPNNDPNQGA) the composition is skewed to polar residues. Residues 47–617 (YTLPNNDPNQ…NPAVNPFFLS (571 aa)) enclose the Lipoxygenase domain. N-linked (GlcNAc...) asparagine glycosylation is found at asparagine 60, asparagine 91, asparagine 106, asparagine 116, and asparagine 157. Mn(2+) is bound by residues histidine 290, histidine 294, histidine 478, and asparagine 482. N-linked (GlcNAc...) asparagine glycosylation is present at asparagine 513. Valine 618 is a Mn(2+) binding site.

It belongs to the lipoxygenase family. Requires Mn(2+) as cofactor. In terms of processing, N- and O-glycosylated.

The protein resides in the secreted. It carries out the reaction (9Z,12Z)-octadecadienoate + O2 = (11S)-hydroperoxy-(9Z,12Z)-octadecadienoate. The catalysed reaction is (9Z,12Z)-octadecadienoate + O2 = (13R)-hydroperoxy-(9Z,11E)-octadecadienoate. The enzyme catalyses (9Z,12Z,15Z)-octadecatrienoate + O2 = (11S)-hydroperoxy-(9Z,12Z,15Z)-octadecatrienoate. It catalyses the reaction (9Z,12Z,15Z)-octadecatrienoate + O2 = (13R)-hydroperoxy-(9Z,11E,15Z)-octadecatrienoate. Functionally, lipoxygenase that metabolizes linoleic and alpha-linolenic acids to 11S- and 13R-hydroperoxy fatty acids. At the end of lipoxygenation, the intermediate product 11S-HPODE from linoleic acid is then transformed into 13R-HPODE as the final product. It also acts on alpha-linolenic acid producing 11S-HPOTrE and 13R-HPOTrE with subsequent transformation of 11S-HPOTrE to 13R-HPOTrE as the final product. Gamma-linolenic acid is a poor substrate. Oleate and arachidonate are not substrates. This is Manganese lipoxygenase from Gaeumannomyces tritici (Wheat and barley take-all root rot fungus).